The chain runs to 225 residues: Protein-L-isoaspartate O-methyltransferase (225 aa).

The active site involves serine 63.

The protein belongs to the methyltransferase superfamily. L-isoaspartyl/D-aspartyl protein methyltransferase family.

Its subcellular location is the cytoplasm. The catalysed reaction is [protein]-L-isoaspartate + S-adenosyl-L-methionine = [protein]-L-isoaspartate alpha-methyl ester + S-adenosyl-L-homocysteine. In terms of biological role, catalyzes the methyl esterification of L-isoaspartyl residues in peptides and proteins that result from spontaneous decomposition of normal L-aspartyl and L-asparaginyl residues. It plays a role in the repair and/or degradation of damaged proteins. The chain is Protein-L-isoaspartate O-methyltransferase from Staphylothermus marinus (strain ATCC 43588 / DSM 3639 / JCM 9404 / F1).